An 85-amino-acid polypeptide reads, in one-letter code: Homeobox protein liguleless 3 (85 aa).

The region spanning E1–F21 is the ELK domain. A DNA-binding region (homeobox; TALE-type) is located at residues L22–S85.

This sequence belongs to the TALE/KNOX homeobox family.

The protein localises to the nucleus. Its function is as follows. Probably binds to the DNA sequence 5'-TGAC-3'. In Zea mays (Maize), this protein is Homeobox protein liguleless 3 (LG3).